The chain runs to 191 residues: Protein Ves (191 aa).

Belongs to the Ves family.

This Shigella boydii serotype 18 (strain CDC 3083-94 / BS512) protein is Protein Ves.